The primary structure comprises 348 residues: Protein RecA (348 aa).

67–74 contributes to the ATP binding site; that stretch reads GPESSGKT.

The protein belongs to the RecA family.

It is found in the cytoplasm. Its function is as follows. Can catalyze the hydrolysis of ATP in the presence of single-stranded DNA, the ATP-dependent uptake of single-stranded DNA by duplex DNA, and the ATP-dependent hybridization of homologous single-stranded DNAs. It interacts with LexA causing its activation and leading to its autocatalytic cleavage. This is Protein RecA from Salinispora arenicola (strain CNS-205).